Reading from the N-terminus, the 405-residue chain is Serine/threonine transporter SstT (405 aa).

9 helical membrane passes run 13–33, 43–63, 81–101, 140–160, 191–211, 215–235, 297–317, 338–358, and 362–382; these read GNLV…ATFS, IGNL…FILV, IVVL…ILSF, ALMN…GLAL, FGIF…ALAG, LLAV…PMIV, MAGA…TMGI, ASGV…LFGI, and IAMQ…SAET.

Belongs to the dicarboxylate/amino acid:cation symporter (DAACS) (TC 2.A.23) family.

It localises to the cell inner membrane. It carries out the reaction L-serine(in) + Na(+)(in) = L-serine(out) + Na(+)(out). The enzyme catalyses L-threonine(in) + Na(+)(in) = L-threonine(out) + Na(+)(out). In terms of biological role, involved in the import of serine and threonine into the cell, with the concomitant import of sodium (symport system). This is Serine/threonine transporter SstT from Vibrio cholerae serotype O1 (strain ATCC 39315 / El Tor Inaba N16961).